The following is a 705-amino-acid chain: 1,4-alpha-glucan branching enzyme GlgB (705 aa).

D393 acts as the Nucleophile in catalysis. Catalysis depends on E446, which acts as the Proton donor.

Belongs to the glycosyl hydrolase 13 family. GlgB subfamily. As to quaternary structure, monomer.

The enzyme catalyses Transfers a segment of a (1-&gt;4)-alpha-D-glucan chain to a primary hydroxy group in a similar glucan chain.. It functions in the pathway glycan biosynthesis; glycogen biosynthesis. Its function is as follows. Catalyzes the formation of the alpha-1,6-glucosidic linkages in glycogen by scission of a 1,4-alpha-linked oligosaccharide from growing alpha-1,4-glucan chains and the subsequent attachment of the oligosaccharide to the alpha-1,6 position. The protein is 1,4-alpha-glucan branching enzyme GlgB of Picrophilus torridus (strain ATCC 700027 / DSM 9790 / JCM 10055 / NBRC 100828 / KAW 2/3).